Here is a 204-residue protein sequence, read N- to C-terminus: Holliday junction branch migration complex subunit RuvA (204 aa).

Residues 1–64 form a domain I region; the sequence is MIGRLRGILL…EDAQLLYGFN (64 aa). Residues 65 to 143 are domain II; that stretch reads TVKERALFRE…GWSAGDLFTP (79 aa). Positions 144–155 are flexible linker; the sequence is FTDAAPVDSGST. The segment at 156–204 is domain III; sequence SSNSAEEEAVSALLALGYKPVQASKVVSQIAKPDMTSEQLIREALKSMV.

This sequence belongs to the RuvA family. As to quaternary structure, homotetramer. Forms an RuvA(8)-RuvB(12)-Holliday junction (HJ) complex. HJ DNA is sandwiched between 2 RuvA tetramers; dsDNA enters through RuvA and exits via RuvB. An RuvB hexamer assembles on each DNA strand where it exits the tetramer. Each RuvB hexamer is contacted by two RuvA subunits (via domain III) on 2 adjacent RuvB subunits; this complex drives branch migration. In the full resolvosome a probable DNA-RuvA(4)-RuvB(12)-RuvC(2) complex forms which resolves the HJ.

It is found in the cytoplasm. In terms of biological role, the RuvA-RuvB-RuvC complex processes Holliday junction (HJ) DNA during genetic recombination and DNA repair, while the RuvA-RuvB complex plays an important role in the rescue of blocked DNA replication forks via replication fork reversal (RFR). RuvA specifically binds to HJ cruciform DNA, conferring on it an open structure. The RuvB hexamer acts as an ATP-dependent pump, pulling dsDNA into and through the RuvAB complex. HJ branch migration allows RuvC to scan DNA until it finds its consensus sequence, where it cleaves and resolves the cruciform DNA. This is Holliday junction branch migration complex subunit RuvA from Vibrio vulnificus (strain CMCP6).